Here is a 188-residue protein sequence, read N- to C-terminus: Mediator of RNA polymerase II transcription subunit 11 (188 aa).

The stretch at K46–Q72 forms a coiled coil. Positions D116 to Q188 are disordered. Residues Q123 to A141 show a composition bias toward acidic residues. The segment covering S146 to D155 has biased composition (low complexity). Residues S171–T180 are compositionally biased toward basic and acidic residues.

It belongs to the Mediator complex subunit 11 family. Component of the Mediator complex.

It localises to the nucleus. Its function is as follows. Component of the Mediator complex, a coactivator involved in the regulated transcription of nearly all RNA polymerase II-dependent genes. Mediator functions as a bridge to convey information from gene-specific regulatory proteins to the basal RNA polymerase II transcription machinery. Mediator is recruited to promoters by direct interactions with regulatory proteins and serves as a scaffold for the assembly of a functional pre-initiation complex with RNA polymerase II and the general transcription factors. This chain is Mediator of RNA polymerase II transcription subunit 11 (mdt-11), found in Caenorhabditis elegans.